The sequence spans 45 residues: Iota-conotoxin-like R11.12 (45 aa).

4 disulfides stabilise this stretch: cysteine 5-cysteine 19, cysteine 12-cysteine 22, cysteine 18-cysteine 27, and cysteine 21-cysteine 36. D-leucine is present on leucine 43. Residue arginine 45 is a propeptide, removed by a carboxypeptidase.

This sequence belongs to the conotoxin I1 superfamily. Expressed by the venom duct.

The protein resides in the secreted. In terms of biological role, iota-conotoxins bind to voltage-gated sodium channels (Nav) and act as agonists by shifting the voltage-dependence of activation to more hyperpolarized levels. Produces general excitatory symptoms. This chain is Iota-conotoxin-like R11.12, found in Conus radiatus (Rayed cone).